The chain runs to 326 residues: Vomeronasal type-1 receptor 100 (326 aa).

Residues 1–32 lie on the Extracellular side of the membrane; the sequence is MSEFPFFSPQPLFSYMMNKNSRVHTDSNIRNT. A helical membrane pass occupies residues 33-53; sequence FFTEIGIGILANSFLLLFHIF. At 54–70 the chain is on the cytoplasmic side; it reads KFIRGQRSRLTDLPIGL. A helical membrane pass occupies residues 71–91; the sequence is LSLIHLLMLLMGAFIAIDIFI. Residues 92–104 are Extracellular-facing; it reads SWRGWDDIICKFL. C101 and C188 form a disulfide bridge. A helical membrane pass occupies residues 105 to 127; it reads VYLYRSFRGLSLCTTCMLSVLQA. The Cytoplasmic segment spans residues 128–149; that stretch reads ITLSPRSSCLAKFKHKSPHHVS. The helical transmembrane segment at 150-170 threads the bilayer; sequence CAIISLSILYMFISSHLLVSI. The Extracellular portion of the chain corresponds to 171-209; that stretch reads NATPNLTTNNFMQVTQSCYIIPLSYLMQSMFSTLLAIRD. The N-linked (GlcNAc...) asparagine glycan is linked to N175. A helical transmembrane segment spans residues 210-230; that stretch reads ISLISLMVLSTCYMVVLLCRH. Topologically, residues 231–254 are cytoplasmic; it reads RNQIQHLQGTNLSPKASPEQRATQ. Residues 255–275 form a helical membrane-spanning segment; that stretch reads TILMLMTFFVLMSIFDSIVSC. Residues 276 to 285 lie on the Extracellular side of the membrane; sequence SRTMYLNDPT. The chain crosses the membrane as a helical span at residues 286–306; the sequence is SYYIQIFVVYIYATVSPFVFM. The Cytoplasmic portion of the chain corresponds to 307–326; that stretch reads STEKHIVNFLKSMCVRVKNV.

This sequence belongs to the G-protein coupled receptor 1 family. Expressed in 1-4% of neurons of the vomeronasal organ. Only one pheromone receptor gene may be expressed in a particular neuron. Not expressed in the main olfactory epithelium.

It localises to the cell membrane. Its function is as follows. Putative pheromone receptor implicated in the regulation of social as well as reproductive behavior. In Rattus norvegicus (Rat), this protein is Vomeronasal type-1 receptor 100 (Vom1r100).